Here is a 659-residue protein sequence, read N- to C-terminus: uncharacterized protein (659 aa).

The signal sequence occupies residues 1-25; it reads MVKRRLSAFGNAFLIYFIIFRLCCC. The Lumenal portion of the chain corresponds to 26-556; the sequence is SPQTSHWCKY…LYQESSFQKR (531 aa). N94, N111, N128, and N142 each carry an N-linked (GlcNAc...) asparagine glycan. The region spanning 173 to 335 is the SUN domain; it reads AATIDSNIDE…SLLRVYGKTM (163 aa). N-linked (GlcNAc...) asparagine glycosylation is found at N393 and N415. A disordered region spans residues 417–445; that stretch reads TGKSESYPATSTRSFNDISPSSSSSYSTA. The segment covering 423 to 434 has biased composition (polar residues); sequence YPATSTRSFNDI. Residues N495 and N504 are each glycosylated (N-linked (GlcNAc...) asparagine). The chain crosses the membrane as a helical span at residues 557–574; sequence LLMLQLTVLIVLTVYMAV. The Cytoplasmic portion of the chain corresponds to 575–659; that stretch reads SRLPENLPTT…IIHSRSHSVC (85 aa). Disordered stretches follow at residues 580-603 and 632-659; these read NLPT…SRDE and KRDP…HSVC. Residues 581–592 show a composition bias toward polar residues; that stretch reads LPTTRSSSNNPI. Positions 641 to 651 are enriched in basic and acidic residues; that stretch reads SIHEREQDKII.

It belongs to the SLP1 family. Interacts with EMP65.

It is found in the endoplasmic reticulum membrane. Functionally, may be involved in membrane protein folding. This is an uncharacterized protein from Schizosaccharomyces pombe (strain 972 / ATCC 24843) (Fission yeast).